The primary structure comprises 612 residues: Vitamin B12 transporter BtuB (612 aa).

Residues 1 to 20 form the signal peptide; sequence MIKKSLLCTALSVTAFSGWA. The short motif at 26–33 is the TonB box element; that stretch reads DTLVVTAN. The TBDR plug domain maps to 38–152; sequence PRSAVLAPIT…IGGVVNIITT (115 aa). Residues serine 85, asparagine 92, and 110–111 contribute to the cyanocob(III)alamin site; that span reads VS. The TBDR beta-barrel domain maps to 155–612; the sequence is KPGTELTAGV…EYTLSGSYTF (458 aa). 3 beta stranded membrane passes run 158–165, 169–178, and 184–195; these read TELTAGVG, YQNYDVSTQQ, and TRVTLMGDYAYT. Ca(2+) is bound by residues aspartate 199, glutamine 211, aspartate 213, and aspartate 215. 2 consecutive transmembrane segments (beta stranded) span residues 217 to 227 and 232 to 248; these read FLSKTLYGALE and DTWS…NRTN. Residues tyrosine 249, aspartate 250, and aspartate 261 each contribute to the Ca(2+) site. 14 beta stranded membrane passes run 263-277, 279-296, 309-325, 328-337, 353-369, 371-381, 385-400, 403-417, 434-443, 449-458, 473-490, 494-509, 517-529, and 535-550; these read RKLY…LRFN, ELIQ…KDYN, TLDE…NSIV, HGNVGAGVDW, YDQR…QQLG, FTFEGAARSDD, FGRH…WEFI, YRFI…KAPN, QSKQWEGAFE, VNWRVSGYRN, YFNE…TANF, PLAH…SRNA, RRSK…QLDW, and DWGL…YDTD. A cyanocob(III)alamin-binding site is contributed by threonine 309. Cyanocob(III)alamin is bound at residue arginine 517. Tyrosine 551 provides a ligand contact to cyanocob(III)alamin. Transmembrane regions (beta stranded) follow at residues 556 to 570, 583 to 594, and 600 to 612; these read PVKM…LAVS, IANRFDKDYETV, and AGRE…SYTF. A TonB C-terminal box motif is present at residues 595 to 612; that stretch reads YGYATAGREYTLSGSYTF.

The protein belongs to the TonB-dependent receptor family. BtuB (TC 1.B.14.3.1) subfamily.

Its subcellular location is the cell outer membrane. Functionally, involved in the active translocation of vitamin B12 (cyanocobalamin) across the outer membrane to the periplasmic space. It derives its energy for transport by interacting with the trans-periplasmic membrane protein TonB. In Citrobacter freundii, this protein is Vitamin B12 transporter BtuB.